Here is a 259-residue protein sequence, read N- to C-terminus: Glycerol-3-phosphate acyltransferase (259 aa).

Helical transmembrane passes span 11-31 (IILA…IIIV), 62-82 (LVVA…AILL), 93-112 (TSYF…PIYY), 124-144 (LGLL…VWFI), 152-172 (VSVA…IPYL), 188-208 (FSVA…HYWF), and 211-231 (IWAS…LILG).

The protein belongs to the PlsY family. In terms of assembly, probably interacts with PlsX.

The protein localises to the cell membrane. The enzyme catalyses an acyl phosphate + sn-glycerol 3-phosphate = a 1-acyl-sn-glycero-3-phosphate + phosphate. Its pathway is lipid metabolism; phospholipid metabolism. In terms of biological role, catalyzes the transfer of an acyl group from acyl-phosphate (acyl-PO(4)) to glycerol-3-phosphate (G3P) to form lysophosphatidic acid (LPA). This enzyme utilizes acyl-phosphate as fatty acyl donor, but not acyl-CoA or acyl-ACP. The polypeptide is Glycerol-3-phosphate acyltransferase (Mycoplasma capricolum subsp. capricolum (strain California kid / ATCC 27343 / NCTC 10154)).